A 198-amino-acid polypeptide reads, in one-letter code: Dual specificity protein phosphatase 14 (198 aa).

Residues 26-167 (GIAQITSSLF…LIDYERQLFG (142 aa)) form the Tyrosine-protein phosphatase domain. The active-site Phosphocysteine intermediate is Cys-111.

The protein belongs to the protein-tyrosine phosphatase family. Non-receptor class dual specificity subfamily. Interacts with CD28.

It catalyses the reaction O-phospho-L-tyrosyl-[protein] + H2O = L-tyrosyl-[protein] + phosphate. The catalysed reaction is O-phospho-L-seryl-[protein] + H2O = L-seryl-[protein] + phosphate. It carries out the reaction O-phospho-L-threonyl-[protein] + H2O = L-threonyl-[protein] + phosphate. Its function is as follows. Involved in the inactivation of MAP kinases. Dephosphorylates ERK, JNK and p38 MAP-kinases. Plays a negative role in TCR signaling by dephosphorylating MAP3K7 adapter TAB1 leading to its inactivation. The protein is Dual specificity protein phosphatase 14 (DUSP14) of Homo sapiens (Human).